Reading from the N-terminus, the 161-residue chain is Transcription elongation factor GreB (161 aa).

This sequence belongs to the GreA/GreB family. GreB subfamily.

Necessary for efficient RNA polymerase transcription elongation past template-encoded arresting sites. The arresting sites in DNA have the property of trapping a certain fraction of elongating RNA polymerases that pass through, resulting in locked ternary complexes. Cleavage of the nascent transcript by cleavage factors such as GreA or GreB allows the resumption of elongation from the new 3'terminus. GreB releases sequences of up to 9 nucleotides in length. The sequence is that of Transcription elongation factor GreB from Vibrio cholerae serotype O1 (strain ATCC 39315 / El Tor Inaba N16961).